Reading from the N-terminus, the 199-residue chain is Peroxisomal membrane protein PEX17 (199 aa).

The protein localises to the peroxisome membrane. Component of the peroxisomal translocation machinery with PEX13 and PEX14. Interacts indirectly with the PTS1 receptor (PAS10/PEX5) and directly binds to PEX14. Required for import of both PTS1 and PTS2 proteins. This Saccharomyces cerevisiae (strain ATCC 204508 / S288c) (Baker's yeast) protein is Peroxisomal membrane protein PEX17 (PEX17).